The sequence spans 363 residues: Flagellar P-ring protein (363 aa).

A signal peptide spans 1-20 (MKKLTLVLFGMLFLASSAHA).

It belongs to the FlgI family. The basal body constitutes a major portion of the flagellar organelle and consists of four rings (L,P,S, and M) mounted on a central rod.

The protein localises to the periplasm. The protein resides in the bacterial flagellum basal body. In terms of biological role, assembles around the rod to form the L-ring and probably protects the motor/basal body from shearing forces during rotation. This Vibrio atlanticus (strain LGP32) (Vibrio splendidus (strain Mel32)) protein is Flagellar P-ring protein.